A 419-amino-acid chain; its full sequence is MDKFRVQGPTQLTGEVIISGAKNAALPILFAALLAEEPVEIQNVPKLRDIDTTMKLLSQLGARVERNGSVHVDAGPVNVFCAPYDLVKTMRASIWALGPLVARFGQGQVSLPGGCAIGARPVDLHINGLEQLGAKITLEEGYVKASVNGRLKGAHIVMDKVSVGATVTIMCAATLAEGKTIIENAAREPEIVDTANFLNTMGAKISGAGSDKIIIEGVKRLGGGVYRVLPDRIETGTFLVAAAVTGGKIVCRNTRPDTLDAVLAKLTDAGADIEVGEDWISLDMQGRRPKAVNIRTAPHPGFPTDMQAQFSLLNMVAEGTGVITETIFENRFMHIPELIRMGGHAEIESNTVICQGVARLSGAQVMATDLRASASLVIAGFVAQGTTIVDRIYHIDRGYESIEEKFRALGGQIDRIKGE.

22-23 contacts phosphoenolpyruvate; that stretch reads KN. R91 contacts UDP-N-acetyl-alpha-D-glucosamine. The Proton donor role is filled by C115. C115 carries the 2-(S-cysteinyl)pyruvic acid O-phosphothioketal modification. Residues 120 to 124, 160 to 163, D305, and I327 each bind UDP-N-acetyl-alpha-D-glucosamine; these read RPVDL and KVSV.

This sequence belongs to the EPSP synthase family. MurA subfamily.

It localises to the cytoplasm. It catalyses the reaction phosphoenolpyruvate + UDP-N-acetyl-alpha-D-glucosamine = UDP-N-acetyl-3-O-(1-carboxyvinyl)-alpha-D-glucosamine + phosphate. It functions in the pathway cell wall biogenesis; peptidoglycan biosynthesis. Its function is as follows. Cell wall formation. Adds enolpyruvyl to UDP-N-acetylglucosamine. This chain is UDP-N-acetylglucosamine 1-carboxyvinyltransferase, found in Tolumonas auensis (strain DSM 9187 / NBRC 110442 / TA 4).